Reading from the N-terminus, the 101-residue chain is Small ribosomal subunit protein uS14 (101 aa).

The tract at residues 1–26 (MAKVSSIQKNKSRQKKSQSLHNKRSE) is disordered. Basic residues predominate over residues 10–22 (NKSRQKKSQSLHN).

Belongs to the universal ribosomal protein uS14 family. In terms of assembly, part of the 30S ribosomal subunit. Contacts proteins S3 and S10.

Binds 16S rRNA, required for the assembly of 30S particles and may also be responsible for determining the conformation of the 16S rRNA at the A site. In Rickettsia prowazekii (strain Madrid E), this protein is Small ribosomal subunit protein uS14.